The chain runs to 931 residues: Dual O-methyltransferase/FAD-dependent monooxygenase elcB (931 aa).

The O-methyltransferase stretch occupies residues 1–463 (MAASTGLSTV…TTDKARPNGD (463 aa)). Position 254 (Asp-254) interacts with S-adenosyl-L-methionine. The active-site Proton acceptor is the His-304. Positions 455 to 474 (TDKARPNGDTTHSGQASIPN) are disordered. Residues 462 to 474 (GDTTHSGQASIPN) are compositionally biased toward polar residues. An FAD-dependent monooxygenase region spans residues 464–931 (TTHSGQASIP…TFEELDVAEL (468 aa)). Glu-520, Arg-604, Asp-836, and Ala-849 together coordinate FAD.

The protein in the C-terminal section; belongs to the paxM FAD-dependent monooxygenase family. It in the N-terminal section; belongs to the class I-like SAM-binding methyltransferase superfamily. Cation-independent O-methyltransferase family. COMT subfamily.

It carries out the reaction nor-toralactone + S-adenosyl-L-methionine = toralactone + S-adenosyl-L-homocysteine + H(+). The catalysed reaction is toralactone + NADH + O2 + H(+) = 1-(3,4,5-trihydroxy-7-methoxynaphthalen-2-yl)propan-2-one + CO2 + NAD(+). Its pathway is secondary metabolite biosynthesis. Dual O-methyltransferase/FAD-dependent monooxygenase; part of the gene cluster that mediates the biosynthesis of elsinochrome C, a perelyenequinone phytotoxin structurally similar to cercosporin. The first step of elsinochrome C biosynthesis is performed by the polyketide synthase elcA which catalyzes the formation of nor-toralactone. The starter unit acyltransferase (SAT) domain of elcA initiates polyketide extension by the selective utilization of acetyl-CoA, which is elongated to the heptaketide in the beta-ketoacyl synthase (KS) domain by successive condensations with six malonyl units introduced by the malonyl acyltransferase (MAT) domain. The product template (PT) domain catalyzes C4-C9 and C2-C11 aldol cyclizations and dehydrations to a trihydroxynaphthalene, which is thought to be delivered to the thioesterase (TE) domain for product release. The bifunctional enzyme elcB then methylates nor-toralactone to toralactone before conducting an unusual oxidative aromatic ring opening. The next step in perylenequinone biosynthesis is an O-methylation at the nascent OH-6 of the elcB product performed by the O-methyltransferase elcD. The oxidative coupling of the two monomeric naphthol units in perylenequinone biosynthesis is catalyzed by the FAD-dependent monooxygenase elcE and the multicopper oxidase elcG. ElcG might catalyze the first intermolecular coupling in a regio- and stereo-selective manner via a phenol radical coupling mechanism and the elcE could forge the second C-C bond intramolecularly via a hydride transfer mechanism. The fasciclin domain-containing protein elcF might also play a role duting this step. The last piece of the puzzle in the biosynthesis of elsinochrome C is the additional annulation by enolate coupling to afford the dihydrobenzo(ghi)perylenequinone system, catalyzed by the FAD-dependent monooxygenase elcH. The chain is Dual O-methyltransferase/FAD-dependent monooxygenase elcB from Phaeosphaeria nodorum (strain SN15 / ATCC MYA-4574 / FGSC 10173) (Glume blotch fungus).